Reading from the N-terminus, the 360-residue chain is Ribosomal RNA large subunit methyltransferase M (360 aa).

Residues Ser-187, 220-223 (CPGG), Asp-239, Asp-259, and Asp-276 contribute to the S-adenosyl-L-methionine site. Lys-305 (proton acceptor) is an active-site residue.

Belongs to the class I-like SAM-binding methyltransferase superfamily. RNA methyltransferase RlmE family. RlmM subfamily. In terms of assembly, monomer.

The protein localises to the cytoplasm. It carries out the reaction cytidine(2498) in 23S rRNA + S-adenosyl-L-methionine = 2'-O-methylcytidine(2498) in 23S rRNA + S-adenosyl-L-homocysteine + H(+). Functionally, catalyzes the 2'-O-methylation at nucleotide C2498 in 23S rRNA. This is Ribosomal RNA large subunit methyltransferase M from Shewanella sediminis (strain HAW-EB3).